The primary structure comprises 1128 residues: Zinc finger protein 654 (1128 aa).

A disordered region spans residues 498–523 (GFDSLTDQSTGETDPDDVSGVQPKGH). 5 C2H2-type zinc fingers span residues 572–594 (FACV…LKNH), 746–771 (FKCP…MTVH), 787–809 (GKCK…LNRH), 815–839 (YFCL…TKSH), and 844–868 (AQCS…EAQH). The segment at 891–951 (DSNPNQEKDS…GNERSDDTVS (61 aa)) is disordered. Polar residues-rich tracts occupy residues 903-915 (NEKQ…VSTS) and 937-951 (SLVQ…DTVS). Serine 1123 and serine 1127 each carry phosphoserine.

Belongs to the krueppel C2H2-type zinc-finger protein family.

Its subcellular location is the nucleus. Its function is as follows. May be involved in transcriptional regulation. The protein is Zinc finger protein 654 of Homo sapiens (Human).